The following is a 194-amino-acid chain: MNKQKNNRERTPQPEQDTERDEQLTNSHENDIDSAPAAEENDKVADPVEELTAQLAALNDTHLRLMAEYDNYRKRTLKEKSELIRNGGEKVLVDLLPVIDDFERALSNLGDMSEPAAIKGGVELIYSKFMDYLQKQGVKKIETADLPFDADLCDAVAMIPAPSAEQKGKVIDCVKTGYTLNDKVIRHAHVVVGE.

Basic and acidic residues predominate over residues 1 to 12; the sequence is MNKQKNNRERTP. The segment at 1–44 is disordered; the sequence is MNKQKNNRERTPQPEQDTERDEQLTNSHENDIDSAPAAEENDKV.

This sequence belongs to the GrpE family. Homodimer.

The protein resides in the cytoplasm. In terms of biological role, participates actively in the response to hyperosmotic and heat shock by preventing the aggregation of stress-denatured proteins, in association with DnaK and GrpE. It is the nucleotide exchange factor for DnaK and may function as a thermosensor. Unfolded proteins bind initially to DnaJ; upon interaction with the DnaJ-bound protein, DnaK hydrolyzes its bound ATP, resulting in the formation of a stable complex. GrpE releases ADP from DnaK; ATP binding to DnaK triggers the release of the substrate protein, thus completing the reaction cycle. Several rounds of ATP-dependent interactions between DnaJ, DnaK and GrpE are required for fully efficient folding. This chain is Protein GrpE, found in Porphyromonas gingivalis (strain ATCC 33277 / DSM 20709 / CIP 103683 / JCM 12257 / NCTC 11834 / 2561).